A 138-amino-acid polypeptide reads, in one-letter code: Ribosome-binding factor A (138 aa).

The protein belongs to the RbfA family. Monomer. Binds 30S ribosomal subunits, but not 50S ribosomal subunits or 70S ribosomes.

It is found in the cytoplasm. One of several proteins that assist in the late maturation steps of the functional core of the 30S ribosomal subunit. Associates with free 30S ribosomal subunits (but not with 30S subunits that are part of 70S ribosomes or polysomes). Required for efficient processing of 16S rRNA. May interact with the 5'-terminal helix region of 16S rRNA. The polypeptide is Ribosome-binding factor A (Paracoccus denitrificans (strain Pd 1222)).